A 467-amino-acid polypeptide reads, in one-letter code: Cytochrome c-552 (467 aa).

A signal peptide spans M1–A27. Position 87 (H87) interacts with heme c. 3 residues coordinate heme: C115, C118, and K119. The heme c site is built by C153, C156, H157, C195, C198, and H199. Ca(2+)-binding residues include E201, Y202, K250, and Q252. Y202 is a substrate binding site. A substrate-binding site is contributed by H253. Residues H264, C271, C274, H275, H290, C303, C306, H307, and H382 each contribute to the heme c site.

This sequence belongs to the cytochrome c-552 family. It depends on Ca(2+) as a cofactor. Heme c is required as a cofactor.

The protein resides in the periplasm. The catalysed reaction is 6 Fe(III)-[cytochrome c] + NH4(+) + 2 H2O = 6 Fe(II)-[cytochrome c] + nitrite + 8 H(+). Its pathway is nitrogen metabolism; nitrate reduction (assimilation). Catalyzes the reduction of nitrite to ammonia, consuming six electrons in the process. The polypeptide is Cytochrome c-552 (Shewanella sp. (strain MR-4)).